The chain runs to 1228 residues: ABC transporter B family member 16 (1228 aa).

6 helical membrane-spanning segments follow: residues 22-42, 69-89, 145-167, 171-193, 251-271, and 283-303; these read MGLG…LFFI, LAML…GYCW, LPNI…MLLW, IVGF…ALIG, GIAI…TWYG, and GTVS…GQAL. Residues 22 to 311 enclose the ABC transmembrane type-1 1 domain; that stretch reads MGLGLIGAVG…ALSNLKYFSE (290 aa). In terms of domain architecture, ABC transporter 1 spans 346 to 582; it reads VEFNNVKCKY…DGKYTSLVRL (237 aa). 381–388 is a binding site for ATP; the sequence is GGSGSGKS. N-linked (GlcNAc...) asparagine glycans are attached at residues asparagine 529, asparagine 593, and asparagine 628. One can recognise an ABC transmembrane type-1 2 domain in the interval 658–946; it reads ALCGCLSASL…AGTMTTDLAK (289 aa). A run of 2 helical transmembrane segments spans residues 667-687 and 700-720; these read LGGA…SVFF and IYVL…ISQQ. An N-linked (GlcNAc...) asparagine glycan is attached at asparagine 755. Transmembrane regions (helical) follow at residues 781–801 and 805–825; these read LLVQ…VIAW and IVMI…RVLL. Asparagine 827 carries N-linked (GlcNAc...) asparagine glycosylation. The next 2 helical transmembrane spans lie at 881–901 and 920–940; these read SWLA…TSAL and FFEL…AGTM. One can recognise an ABC transporter 2 domain in the interval 981-1219; it reads ITFLNVDFAY…GPTGSYFSLV (239 aa). Asparagine 1001 carries N-linked (GlcNAc...) asparagine glycosylation. Position 1016 to 1023 (1016 to 1023) interacts with ATP; sequence GPSRSGKS.

The protein belongs to the ABC transporter superfamily. ABCB family. Multidrug resistance exporter (TC 3.A.1.201) subfamily.

The protein localises to the membrane. The chain is ABC transporter B family member 16 (ABCB16) from Arabidopsis thaliana (Mouse-ear cress).